A 290-amino-acid chain; its full sequence is 4-hydroxy-tetrahydrodipicolinate synthase (290 aa).

Residue Thr-48 coordinates pyruvate. Tyr-137 serves as the catalytic Proton donor/acceptor. The Schiff-base intermediate with substrate role is filled by Lys-165. A pyruvate-binding site is contributed by Ile-206.

Belongs to the DapA family. Homotetramer; dimer of dimers.

The protein resides in the cytoplasm. The enzyme catalyses L-aspartate 4-semialdehyde + pyruvate = (2S,4S)-4-hydroxy-2,3,4,5-tetrahydrodipicolinate + H2O + H(+). Its pathway is amino-acid biosynthesis; L-lysine biosynthesis via DAP pathway; (S)-tetrahydrodipicolinate from L-aspartate: step 3/4. Its function is as follows. Catalyzes the condensation of (S)-aspartate-beta-semialdehyde [(S)-ASA] and pyruvate to 4-hydroxy-tetrahydrodipicolinate (HTPA). The sequence is that of 4-hydroxy-tetrahydrodipicolinate synthase from Enterococcus faecalis (strain ATCC 700802 / V583).